Reading from the N-terminus, the 402-residue chain is Endo-polygalacturonase (402 aa).

An N-terminal signal peptide occupies residues 1 to 23 (MEYQSGKRVLSLSLGLIGLFSAS). Asp249 (proton donor) is an active-site residue. The active site involves His277.

It belongs to the glycosyl hydrolase 28 family. Monomer.

It is found in the secreted. It carries out the reaction (1,4-alpha-D-galacturonosyl)n+m + H2O = (1,4-alpha-D-galacturonosyl)n + (1,4-alpha-D-galacturonosyl)m.. Involved in maceration and soft-rotting of plant tissue. The sequence is that of Endo-polygalacturonase (peh) from Pectobacterium carotovorum subsp. carotovorum (Erwinia carotovora subsp. carotovora).